A 155-amino-acid polypeptide reads, in one-letter code: SsrA-binding protein (155 aa).

Belongs to the SmpB family.

It is found in the cytoplasm. Functionally, required for rescue of stalled ribosomes mediated by trans-translation. Binds to transfer-messenger RNA (tmRNA), required for stable association of tmRNA with ribosomes. tmRNA and SmpB together mimic tRNA shape, replacing the anticodon stem-loop with SmpB. tmRNA is encoded by the ssrA gene; the 2 termini fold to resemble tRNA(Ala) and it encodes a 'tag peptide', a short internal open reading frame. During trans-translation Ala-aminoacylated tmRNA acts like a tRNA, entering the A-site of stalled ribosomes, displacing the stalled mRNA. The ribosome then switches to translate the ORF on the tmRNA; the nascent peptide is terminated with the 'tag peptide' encoded by the tmRNA and targeted for degradation. The ribosome is freed to recommence translation, which seems to be the essential function of trans-translation. In Geobacillus kaustophilus (strain HTA426), this protein is SsrA-binding protein.